We begin with the raw amino-acid sequence, 299 residues long: Bifunctional protein FolD (299 aa).

NADP(+) contacts are provided by residues glycine 168–serine 170, serine 193, and isoleucine 234.

Belongs to the tetrahydrofolate dehydrogenase/cyclohydrolase family. In terms of assembly, homodimer.

The enzyme catalyses (6R)-5,10-methylene-5,6,7,8-tetrahydrofolate + NADP(+) = (6R)-5,10-methenyltetrahydrofolate + NADPH. The catalysed reaction is (6R)-5,10-methenyltetrahydrofolate + H2O = (6R)-10-formyltetrahydrofolate + H(+). The protein operates within one-carbon metabolism; tetrahydrofolate interconversion. Catalyzes the oxidation of 5,10-methylenetetrahydrofolate to 5,10-methenyltetrahydrofolate and then the hydrolysis of 5,10-methenyltetrahydrofolate to 10-formyltetrahydrofolate. The sequence is that of Bifunctional protein FolD from Brucella anthropi (strain ATCC 49188 / DSM 6882 / CCUG 24695 / JCM 21032 / LMG 3331 / NBRC 15819 / NCTC 12168 / Alc 37) (Ochrobactrum anthropi).